A 380-amino-acid polypeptide reads, in one-letter code: Chaperone protein DnaJ (380 aa).

The region spanning 5–72 (DFYEVLGVAK…NKRAAYDQYG (68 aa)) is the J domain. The CR-type zinc-finger motif lies at 140 to 218 (GKDAQIRIPS…CGGQGKVKRQ (79 aa)). C153, C156, C170, C173, C192, C195, C206, and C209 together coordinate Zn(2+). CXXCXGXG motif repeat units lie at residues 153-160 (CDTCHGSG), 170-177 (CTTCNGMG), 192-199 (CPHCRGTG), and 206-213 (CTSCGGQG). The tract at residues 359-380 (KGGAKHSPSGESWTDRLKSFFS) is disordered. Positions 371 to 380 (WTDRLKSFFS) are enriched in basic and acidic residues.

It belongs to the DnaJ family. In terms of assembly, homodimer. Requires Zn(2+) as cofactor.

It localises to the cytoplasm. In terms of biological role, participates actively in the response to hyperosmotic and heat shock by preventing the aggregation of stress-denatured proteins and by disaggregating proteins, also in an autonomous, DnaK-independent fashion. Unfolded proteins bind initially to DnaJ; upon interaction with the DnaJ-bound protein, DnaK hydrolyzes its bound ATP, resulting in the formation of a stable complex. GrpE releases ADP from DnaK; ATP binding to DnaK triggers the release of the substrate protein, thus completing the reaction cycle. Several rounds of ATP-dependent interactions between DnaJ, DnaK and GrpE are required for fully efficient folding. Also involved, together with DnaK and GrpE, in the DNA replication of plasmids through activation of initiation proteins. The sequence is that of Chaperone protein DnaJ from Delftia acidovorans (strain DSM 14801 / SPH-1).